Reading from the N-terminus, the 107-residue chain is Prepilin peptidase-dependent protein C (107 aa).

Positions 1-10 are excised as a propeptide; it reads MSASLKNQQG. The residue at position 11 (Phe-11) is an N-methylphenylalanine. Residues 11 to 30 traverse the membrane as a helical segment; the sequence is FSLPEVMLAMVLMVMIVTAL.

The protein resides in the membrane. Its function is as follows. Not yet known. This Escherichia coli (strain K12) protein is Prepilin peptidase-dependent protein C (ppdC).